Consider the following 429-residue polypeptide: Trigger factor (429 aa).

A PPIase FKBP-type domain is found at 161 to 246 (GDRLSIDFKG…INEIASPKEL (86 aa)).

This sequence belongs to the FKBP-type PPIase family. Tig subfamily.

It localises to the cytoplasm. It carries out the reaction [protein]-peptidylproline (omega=180) = [protein]-peptidylproline (omega=0). Functionally, involved in protein export. Acts as a chaperone by maintaining the newly synthesized protein in an open conformation. Functions as a peptidyl-prolyl cis-trans isomerase. The protein is Trigger factor of Vesicomyosocius okutanii subsp. Calyptogena okutanii (strain HA).